Reading from the N-terminus, the 497-residue chain is GDP-fucose protein O-fucosyltransferase 4 (497 aa).

Residues 1 to 6 (MACRRR) are Cytoplasmic-facing. A helical; Signal-anchor for type II membrane protein membrane pass occupies residues 7–27 (LLPCAGLGLFGVLCWVWVSFA). Topologically, residues 28–497 (SFPDDQLPLE…ITERRARGKH (470 aa)) are lumenal. An N-linked (GlcNAc...) asparagine glycan is attached at asparagine 169. Cysteine 392 and cysteine 395 are disulfide-bonded. Positions 406–427 (RAHRKDPERNPPPLPKMASNSH) are disordered. An N-linked (GlcNAc...) asparagine glycan is attached at asparagine 474.

Belongs to the glycosyltransferase 10 family.

It is found in the endoplasmic reticulum membrane. The enzyme catalyses L-threonyl-[protein] + GDP-beta-L-fucose = 3-O-(alpha-L-fucosyl)-L-threonyl-[protein] + GDP + H(+). It carries out the reaction L-seryl-[protein] + GDP-beta-L-fucose = 3-O-(alpha-L-fucosyl)-L-seryl-[protein] + GDP + H(+). It participates in protein modification; protein glycosylation. Its function is as follows. Protein O-fucosyltransferase that specifically catalyzes O-fucosylation of serine or threonine residues in EMI domains of target proteins. Attaches fucose through an O-glycosidic linkage. O-fucosylation of EMI domain-containing proteins may be required for facilitating protein folding and secretion. The polypeptide is GDP-fucose protein O-fucosyltransferase 4 (fut11) (Oryzias latipes (Japanese rice fish)).